The sequence spans 837 residues: ABC transporter A family member 8 (837 aa).

The next 7 membrane-spanning stretches (helical) occupy residues 29-49 (YFSTIIELLSPIVFVLIFYII), 244-264 (VVSLFGGLFYYCAIMISFIFL), 303-323 (LIICLLLIAIGAICKLPFFLG), 326-346 (FLVLLLNFFLFAISSSSMAFF), 356-376 (VAIGIGMAFFIVGSGLQLTFN), 393-413 (GAAFVRVILFILPMFHFSKVL), and 455-475 (LAYMFILVIVYLSLSAIIEYA). Residues 516 to 750 (IRGLSKTFNK…YGEGYSVQVI (235 aa)) enclose the ABC transporter domain. 553 to 560 (GSNGAGKS) provides a ligand contact to ATP.

It belongs to the ABC transporter superfamily. ABCA family.

Its subcellular location is the membrane. The sequence is that of ABC transporter A family member 8 (abcA8) from Dictyostelium discoideum (Social amoeba).